Here is a 383-residue protein sequence, read N- to C-terminus: 1-deoxy-D-xylulose 5-phosphate reductoisomerase (383 aa).

Residues T10, G11, S12, I13, and N123 each contribute to the NADPH site. Residue K124 coordinates 1-deoxy-D-xylulose 5-phosphate. NADPH is bound at residue E125. Position 149 (D149) interacts with Mn(2+). 4 residues coordinate 1-deoxy-D-xylulose 5-phosphate: S150, E151, S175, and H198. E151 contacts Mn(2+). G204 is a binding site for NADPH. The 1-deoxy-D-xylulose 5-phosphate site is built by S211, N216, K217, and E220. E220 is a Mn(2+) binding site.

This sequence belongs to the DXR family. Mg(2+) serves as cofactor. The cofactor is Mn(2+).

It carries out the reaction 2-C-methyl-D-erythritol 4-phosphate + NADP(+) = 1-deoxy-D-xylulose 5-phosphate + NADPH + H(+). It functions in the pathway isoprenoid biosynthesis; isopentenyl diphosphate biosynthesis via DXP pathway; isopentenyl diphosphate from 1-deoxy-D-xylulose 5-phosphate: step 1/6. Functionally, catalyzes the NADPH-dependent rearrangement and reduction of 1-deoxy-D-xylulose-5-phosphate (DXP) to 2-C-methyl-D-erythritol 4-phosphate (MEP). In Desulfosudis oleivorans (strain DSM 6200 / JCM 39069 / Hxd3) (Desulfococcus oleovorans), this protein is 1-deoxy-D-xylulose 5-phosphate reductoisomerase.